The sequence spans 328 residues: Lipoyl synthase (328 aa).

7 residues coordinate [4Fe-4S] cluster: Cys75, Cys80, Cys86, Cys101, Cys105, Cys108, and Ser315. The Radical SAM core domain maps to 87–304 (FNHGTATFMI…EREAKKMGYE (218 aa)).

The protein belongs to the radical SAM superfamily. Lipoyl synthase family. The cofactor is [4Fe-4S] cluster.

It localises to the cytoplasm. The catalysed reaction is [[Fe-S] cluster scaffold protein carrying a second [4Fe-4S](2+) cluster] + N(6)-octanoyl-L-lysyl-[protein] + 2 oxidized [2Fe-2S]-[ferredoxin] + 2 S-adenosyl-L-methionine + 4 H(+) = [[Fe-S] cluster scaffold protein] + N(6)-[(R)-dihydrolipoyl]-L-lysyl-[protein] + 4 Fe(3+) + 2 hydrogen sulfide + 2 5'-deoxyadenosine + 2 L-methionine + 2 reduced [2Fe-2S]-[ferredoxin]. Its pathway is protein modification; protein lipoylation via endogenous pathway; protein N(6)-(lipoyl)lysine from octanoyl-[acyl-carrier-protein]: step 2/2. In terms of biological role, catalyzes the radical-mediated insertion of two sulfur atoms into the C-6 and C-8 positions of the octanoyl moiety bound to the lipoyl domains of lipoate-dependent enzymes, thereby converting the octanoylated domains into lipoylated derivatives. The sequence is that of Lipoyl synthase from Colwellia psychrerythraea (strain 34H / ATCC BAA-681) (Vibrio psychroerythus).